A 203-amino-acid chain; its full sequence is Glycerol-3-phosphate acyltransferase (203 aa).

6 helical membrane passes run 3 to 23 (ILLA…VVVS), 51 to 71 (KAAI…VWLV), 74 to 94 (FGIG…LGHL), 116 to 136 (AVHP…AFFF), 140 to 160 (SLAA…LFGT), and 164 to 178 (PVAW…LLIW).

This sequence belongs to the PlsY family. Probably interacts with PlsX.

The protein localises to the cell inner membrane. It carries out the reaction an acyl phosphate + sn-glycerol 3-phosphate = a 1-acyl-sn-glycero-3-phosphate + phosphate. It participates in lipid metabolism; phospholipid metabolism. Functionally, catalyzes the transfer of an acyl group from acyl-phosphate (acyl-PO(4)) to glycerol-3-phosphate (G3P) to form lysophosphatidic acid (LPA). This enzyme utilizes acyl-phosphate as fatty acyl donor, but not acyl-CoA or acyl-ACP. The protein is Glycerol-3-phosphate acyltransferase of Burkholderia pseudomallei (strain K96243).